The following is a 296-amino-acid chain: Formamidopyrimidine-DNA glycosylase (296 aa).

Pro2 acts as the Schiff-base intermediate with DNA in catalysis. The Proton donor role is filled by Glu3. Lys61 functions as the Proton donor; for beta-elimination activity in the catalytic mechanism. Positions 95, 122, and 169 each coordinate DNA. Residues 255 to 289 (NAYGRNDQPCARCGTPIQRETFMNRSSYSCPRCQP) form an FPG-type zinc finger. Arg279 serves as the catalytic Proton donor; for delta-elimination activity.

Belongs to the FPG family. Monomer. It depends on Zn(2+) as a cofactor.

The enzyme catalyses Hydrolysis of DNA containing ring-opened 7-methylguanine residues, releasing 2,6-diamino-4-hydroxy-5-(N-methyl)formamidopyrimidine.. It carries out the reaction 2'-deoxyribonucleotide-(2'-deoxyribose 5'-phosphate)-2'-deoxyribonucleotide-DNA = a 3'-end 2'-deoxyribonucleotide-(2,3-dehydro-2,3-deoxyribose 5'-phosphate)-DNA + a 5'-end 5'-phospho-2'-deoxyribonucleoside-DNA + H(+). In terms of biological role, involved in base excision repair of DNA damaged by oxidation or by mutagenic agents. Acts as a DNA glycosylase that recognizes and removes damaged bases. Has a preference for oxidized purines, such as 7,8-dihydro-8-oxoguanine (8-oxoG). Has AP (apurinic/apyrimidinic) lyase activity and introduces nicks in the DNA strand. Cleaves the DNA backbone by beta-delta elimination to generate a single-strand break at the site of the removed base with both 3'- and 5'-phosphates. The sequence is that of Formamidopyrimidine-DNA glycosylase from Thermobifida fusca (strain YX).